The primary structure comprises 252 residues: tRNA (guanine-N(1)-)-methyltransferase (252 aa).

Residues Gly-113 and 133–138 (LGDYVL) each bind S-adenosyl-L-methionine.

This sequence belongs to the RNA methyltransferase TrmD family. As to quaternary structure, homodimer.

The protein localises to the cytoplasm. The catalysed reaction is guanosine(37) in tRNA + S-adenosyl-L-methionine = N(1)-methylguanosine(37) in tRNA + S-adenosyl-L-homocysteine + H(+). Specifically methylates guanosine-37 in various tRNAs. This Stenotrophomonas maltophilia (strain R551-3) protein is tRNA (guanine-N(1)-)-methyltransferase.